We begin with the raw amino-acid sequence, 212 residues long: Uridine kinase (212 aa).

Position 13–20 (13–20) interacts with ATP; sequence GASASGKS.

Belongs to the uridine kinase family.

It localises to the cytoplasm. It carries out the reaction uridine + ATP = UMP + ADP + H(+). The catalysed reaction is cytidine + ATP = CMP + ADP + H(+). Its pathway is pyrimidine metabolism; CTP biosynthesis via salvage pathway; CTP from cytidine: step 1/3. It participates in pyrimidine metabolism; UMP biosynthesis via salvage pathway; UMP from uridine: step 1/1. In Shewanella baltica (strain OS155 / ATCC BAA-1091), this protein is Uridine kinase.